The sequence spans 179 residues: Putative BPIFA4P protein (179 aa).

The N-terminal stretch at 1–20 (MLNVSGLFVLLCGLLVSSSA) is a signal peptide.

Belongs to the BPI/LBP/Plunc superfamily. Plunc family. In terms of tissue distribution, expressed in breast cancer and salivary gland.

The protein localises to the secreted. In terms of biological role, major protein in sweat, has surfactant properties. The protein is Putative BPIFA4P protein (BPIFA4P) of Homo sapiens (Human).